Here is a 277-residue protein sequence, read N- to C-terminus: Glucose-6-phosphatase catalytic subunit 1 (277 aa).

Arg-4 is a binding site for substrate. Helical transmembrane passes span Gly-39–Ala-59 and Leu-67–Val-87. The Proton donor role is filled by His-40. Residue Arg-91 participates in substrate binding. The Nucleophile role is filled by His-97. 3 consecutive transmembrane segments (helical) span residues Phe-131–Leu-151, Ile-215–Pro-235, and Ala-250–Val-270. The Prevents secretion from ER motif lies at Gly-274 to Leu-277.

Belongs to the glucose-6-phosphatase family.

Its subcellular location is the endoplasmic reticulum membrane. The enzyme catalyses D-glucose 6-phosphate + H2O = D-glucose + phosphate. It participates in carbohydrate biosynthesis; gluconeogenesis. Functionally, hydrolyzes glucose-6-phosphate to glucose in the endoplasmic reticulum. Forms with the glucose-6-phosphate transporter (SLC37A4/G6PT) the complex responsible for glucose production in the terminal step of glycogenolysis and gluconeogenesis. Hence, it is the key enzyme in homeostatic regulation of blood glucose levels. The sequence is that of Glucose-6-phosphatase catalytic subunit 1 (g6pc1) from Haplochromis xenognathus (Lake Victoria cichlid).